We begin with the raw amino-acid sequence, 315 residues long: Acetyl-coenzyme A carboxylase carboxyl transferase subunit alpha (315 aa).

The CoA carboxyltransferase C-terminal domain occupies 40–293; the sequence is LQDKSKTLTE…REELSSQLAM (254 aa).

Belongs to the AccA family. In terms of assembly, acetyl-CoA carboxylase is a heterohexamer composed of biotin carboxyl carrier protein (AccB), biotin carboxylase (AccC) and two subunits each of ACCase subunit alpha (AccA) and ACCase subunit beta (AccD).

It localises to the cytoplasm. The catalysed reaction is N(6)-carboxybiotinyl-L-lysyl-[protein] + acetyl-CoA = N(6)-biotinyl-L-lysyl-[protein] + malonyl-CoA. It functions in the pathway lipid metabolism; malonyl-CoA biosynthesis; malonyl-CoA from acetyl-CoA: step 1/1. Component of the acetyl coenzyme A carboxylase (ACC) complex. First, biotin carboxylase catalyzes the carboxylation of biotin on its carrier protein (BCCP) and then the CO(2) group is transferred by the carboxyltransferase to acetyl-CoA to form malonyl-CoA. The protein is Acetyl-coenzyme A carboxylase carboxyl transferase subunit alpha of Pseudomonas savastanoi pv. phaseolicola (strain 1448A / Race 6) (Pseudomonas syringae pv. phaseolicola (strain 1448A / Race 6)).